Here is a 763-residue protein sequence, read N- to C-terminus: Phosphoglycerol transferase I (763 aa).

The next 4 membrane-spanning stretches (helical) occupy residues 1–21 (MSEL…AWKA), 26–46 (WWFA…ITLY), 77–97 (ILPG…LGWI), and 108–128 (VGYS…SPAF).

The protein belongs to the OpgB family.

The protein localises to the cell inner membrane. The catalysed reaction is a phosphatidylglycerol + a membrane-derived-oligosaccharide D-glucose = a 1,2-diacyl-sn-glycerol + a membrane-derived-oligosaccharide 6-(glycerophospho)-D-glucose.. It functions in the pathway glycan metabolism; osmoregulated periplasmic glucan (OPG) biosynthesis. Functionally, transfers a phosphoglycerol residue from phosphatidylglycerol to the membrane-bound nascent glucan backbones. The sequence is that of Phosphoglycerol transferase I from Salmonella newport (strain SL254).